An 83-amino-acid chain; its full sequence is U20-theraphotoxin-Cg1a 1 (83 aa).

An N-terminal signal peptide occupies residues 1-21 (MKVSVLITLAVLGVMFVWTSA). Positions 22–47 (AELEERGSDQPAWLKSLERIFQSEER) are excised as a propeptide. Disulfide bonds link cysteine 49/cysteine 63, cysteine 56/cysteine 68, and cysteine 62/cysteine 76.

Belongs to the neurotoxin 10 (Hwtx-1) family. 40 (Jztx-35) subfamily. Expressed by the venom gland.

The protein localises to the secreted. In terms of biological role, probable ion channel inhibitor. This Chilobrachys guangxiensis (Chinese earth tiger tarantula) protein is U20-theraphotoxin-Cg1a 1.